The chain runs to 339 residues: Dihydroorotase (339 aa).

Residues His-12 and His-14 each contribute to the Zn(2+) site. Residues 14 to 16 (HVR) and Asn-40 each bind substrate. Zn(2+) contacts are provided by Lys-94, His-133, His-167, and Asp-239. Lys-94 bears the N6-carboxylysine mark. His-133 is a binding site for substrate. Residue Asp-239 is part of the active site. The substrate site is built by His-243 and Ala-255.

Belongs to the metallo-dependent hydrolases superfamily. DHOase family. Class II DHOase subfamily. In terms of assembly, homodimer. It depends on Zn(2+) as a cofactor.

It catalyses the reaction (S)-dihydroorotate + H2O = N-carbamoyl-L-aspartate + H(+). The protein operates within pyrimidine metabolism; UMP biosynthesis via de novo pathway; (S)-dihydroorotate from bicarbonate: step 3/3. Functionally, catalyzes the reversible cyclization of carbamoyl aspartate to dihydroorotate. The protein is Dihydroorotase of Helicobacter pylori (strain G27).